A 304-amino-acid polypeptide reads, in one-letter code: NADH-cytochrome b5 reductase 2 (304 aa).

The helical transmembrane segment at 6-26 threads the bilayer; that stretch reads GTPVVVAVAAVAATVLLLLLL. The FAD-binding FR-type domain occupies 43–155; sequence QAKYPLPLVG…RGPNGLLVYK (113 aa). FAD contacts are provided by residues 135 to 165 and 174 to 209; these read DSMK…IKPD and FAKH…KCYL.

The protein belongs to the flavoprotein pyridine nucleotide cytochrome reductase family. FAD serves as cofactor.

The protein resides in the membrane. The enzyme catalyses 2 Fe(III)-[cytochrome b5] + NADH = 2 Fe(II)-[cytochrome b5] + NAD(+) + H(+). NADH-cytochrome b5 reductases are involved in desaturation and elongation of fatty acids, cholesterol biosynthesis and drug metabolism. This Gallus gallus (Chicken) protein is NADH-cytochrome b5 reductase 2 (CYB5R2).